Reading from the N-terminus, the 152-residue chain is Large ribosomal subunit protein bL9 (152 aa).

The protein belongs to the bacterial ribosomal protein bL9 family.

Its function is as follows. Binds to the 23S rRNA. The protein is Large ribosomal subunit protein bL9 of Prochlorococcus marinus (strain SARG / CCMP1375 / SS120).